Consider the following 317-residue polypeptide: Proline iminopeptidase (317 aa).

In terms of domain architecture, AB hydrolase-1 spans 41–296 (VFIHGGPGGG…ELHIVEGAGH (256 aa)). Serine 113 (nucleophile) is an active-site residue. Residue aspartate 268 is part of the active site. The active-site Proton donor is the histidine 296.

This sequence belongs to the peptidase S33 family. Monomer.

The protein localises to the cytoplasm. The enzyme catalyses Release of N-terminal proline from a peptide.. In terms of biological role, specifically catalyzes the removal of N-terminal proline residues from peptides. The protein is Proline iminopeptidase (pip) of Serratia marcescens.